Reading from the N-terminus, the 236-residue chain is Chorionic somatomammotropin hormone (236 aa).

An N-terminal signal peptide occupies residues 1-36; the sequence is MAPASSHREHQWTCNLVRGSRLLLLLVVSNLILCQG. 3 disulfides stabilise this stretch: Cys-44-Cys-51, Cys-97-Cys-212, and Cys-229-Cys-234.

This sequence belongs to the somatotropin/prolactin family.

The protein resides in the secreted. This is Chorionic somatomammotropin hormone (CSH) from Ovis aries (Sheep).